The sequence spans 142 residues: DNA-directed RNA polymerase II subunit RPB4 (142 aa).

It belongs to the eukaryotic RPB4 RNA polymerase subunit family. As to quaternary structure, component of the RNA polymerase II (Pol II) core complex consisting of 12 subunits: a ten-subunit catalytic core composed of POLR2A/RPB1, POLR2B/RPB2, POLR2C/RPB3, POLR2I/RPB9, POLR2J/RPB11, POLR2E/RPABC1, POLR2F/RPABC2, POLR2H/RPABC3, POLR2K/RPABC4 and POLR2L/RPABC5 and a mobile stalk composed of two subunits POLR2D/RPB4 and POLR2G/RPB7, protruding from the core and functioning primarily in transcription initiation. Part of Pol II(G) complex, in which Pol II core associates with an additional subunit POLR2M; unlike conventional Pol II, Pol II(G) functions as a transcriptional repressor. Part of Pol II pre-initiation complex (PIC), in which Pol II core assembles with Mediator, general transcription factors and other specific initiation factors including GTF2E1, GTF2E2, GTF2F1, GTF2F2, TCEA1, ERCC2, ERCC3, GTF2H2, GTF2H3, GTF2H4, GTF2H5, GTF2A1, GTF2A2, GTF2B and TBP; this large multi-subunit PIC complex mediates DNA unwinding and targets Pol II core to the transcription start site where the first phosphodiester bond forms.

The protein localises to the nucleus. Functionally, core component of RNA polymerase II (Pol II), a DNA-dependent RNA polymerase which synthesizes mRNA precursors and many functional non-coding RNAs using the four ribonucleoside triphosphates as substrates. Pol II is the central component of the basal RNA polymerase II transcription machinery. It is composed of mobile elements that move relative to each other. POLR2D/RPB4 is part of a subcomplex with POLR2G/RPB7 that binds to a pocket formed by POLR2A/RPB1, POLR2B/RPB2 and POLR2F/RPABC2 at the base of the clamp element. The POLR2D/RPB4-POLR2G/RPB7 subcomplex seems to lock the clamp via POLR2G/RPB7 in the closed conformation thus preventing double-stranded DNA to enter the active site cleft. The POLR2D/RPB4-POLR2G/RPB7 subcomplex binds single-stranded DNA and RNA. This chain is DNA-directed RNA polymerase II subunit RPB4 (POLR2D), found in Bos taurus (Bovine).